A 361-amino-acid chain; its full sequence is Rhomboid domain-containing protein 2 (361 aa).

5 helical membrane passes run 19–39, 63–83, 100–120, 158–178, and 182–202; these read SATF…LFLL, LVTY…AIII, CFFT…FESV, FGVV…SWLI, and SFLS…TYCY. 2 disordered regions span residues 265–287 and 318–361; these read PSYP…PPGH and PASA…VAMP. Polar residues-rich tracts occupy residues 267–276 and 318–328; these read YPVTQMQHAS and PASAGTSQGVQ.

Belongs to the peptidase S54 family. Might form homotrimers; these trimers are only formed in retina. Widely expressed, including in retina and brain (at protein level), as well as in kidney, testis and ovary. Expressed in all layers of the retina, including inner segments of photoreceptor cells and ganglion cells (at protein level).

The protein resides in the golgi apparatus. It localises to the cis-Golgi network membrane. This chain is Rhomboid domain-containing protein 2 (Rhbdd2), found in Mus musculus (Mouse).